Consider the following 469-residue polypeptide: Probable Xaa-Pro aminopeptidase PEPP (469 aa).

4 residues coordinate Mn(2+): aspartate 257, aspartate 268, glutamate 391, and glutamate 436.

This sequence belongs to the peptidase M24B family. Mn(2+) serves as cofactor.

It catalyses the reaction Release of any N-terminal amino acid, including proline, that is linked to proline, even from a dipeptide or tripeptide.. Its function is as follows. Catalyzes the removal of a penultimate prolyl residue from the N-termini of peptides. The sequence is that of Probable Xaa-Pro aminopeptidase PEPP (PEPP) from Fusarium vanettenii (strain ATCC MYA-4622 / CBS 123669 / FGSC 9596 / NRRL 45880 / 77-13-4) (Fusarium solani subsp. pisi).